Reading from the N-terminus, the 223-residue chain is MHMRSFKIAIDGPAGSGKSTISKKLSQKLGWNHIDTGAMFRALTLYLLENEVSWHNEKSLNQILDKINLSYSCNKIFLNQEDVSLKIKSLDVEKHVSSVALIPGVRTKLLKLQKEICANTPNLIMDGRDIGTVVMPDANLKIFLTANITKRALRKQQEDAQNGKITDITQIMKQLKERDHKDYHRHLAPLSKALDAILLDTTELSIDELIAKITTLIEKKRRA.

12–20 (GPAGSGKST) lines the ATP pocket.

This sequence belongs to the cytidylate kinase family. Type 1 subfamily.

The protein localises to the cytoplasm. The enzyme catalyses CMP + ATP = CDP + ADP. The catalysed reaction is dCMP + ATP = dCDP + ADP. The protein is Cytidylate kinase of Aster yellows witches'-broom phytoplasma (strain AYWB).